A 148-amino-acid chain; its full sequence is Lysozyme C (148 aa).

The first 18 residues, 1–18, serve as a signal peptide directing secretion; sequence MKALIVLGLVLLSVMVQG. The 130-residue stretch at 19-148 folds into the C-type lysozyme domain; it reads KVFERCELAR…VRQYVQGCGV (130 aa). Intrachain disulfides connect cysteine 24/cysteine 146, cysteine 48/cysteine 134, cysteine 83/cysteine 99, and cysteine 95/cysteine 113. Residues glutamate 53 and aspartate 71 contribute to the active site.

Belongs to the glycosyl hydrolase 22 family. As to quaternary structure, monomer.

It catalyses the reaction Hydrolysis of (1-&gt;4)-beta-linkages between N-acetylmuramic acid and N-acetyl-D-glucosamine residues in a peptidoglycan and between N-acetyl-D-glucosamine residues in chitodextrins.. Lysozymes have primarily a bacteriolytic function; those in tissues and body fluids are associated with the monocyte-macrophage system and enhance the activity of immunoagents. The chain is Lysozyme C (LYZ) from Gorilla gorilla gorilla (Western lowland gorilla).